The primary structure comprises 285 residues: HTH-type transcriptional regulator MurR (285 aa).

The 77-residue stretch at 1–77 (MLYLTKIRNA…MALIGEYSAS (77 aa)) folds into the HTH rpiR-type domain. The H-T-H motif DNA-binding region spans 37 to 56 (SRKMAKQLGISQSSIVKFAQ). An SIS domain is found at 128 to 268 (IIEVISKAPF…FVGLVQLNDV (141 aa)).

In terms of assembly, homotetramer.

It functions in the pathway amino-sugar metabolism; N-acetylmuramate degradation [regulation]. Represses the expression of the murPQ operon involved in the uptake and degradation of N-acetylmuramic acid (MurNAc). Binds to two adjacent inverted repeats within the operator region. MurNAc 6-phosphate, the substrate of MurQ, is the specific inducer that weakens binding of MurR to the operator. This chain is HTH-type transcriptional regulator MurR, found in Escherichia coli O9:H4 (strain HS).